The following is a 757-amino-acid chain: DNA endonuclease RBBP8 (757 aa).

The segment at 22–45 (DLWTKLKEYHDKETQGLQVKVTKL) is essential for binding to the MRN complex and for RPA focus formation on DNA damage. Positions 35-84 (TQGLQVKVTKLKKERILDAQRLEEFFTKNQQLREQQKVLHETIKVLEDRL) form a coiled coil. Residues 45 to 160 (LKKERILDAQ…TDLESEEDVI (116 aa)) form a required for interaction with LMO4, probably by stabilizing the interaction through RPPB8 dimerization region. Glycyl lysine isopeptide (Lys-Gly) (interchain with G-Cter in SUMO2) cross-links involve residues lysine 62 and lysine 115. The stretch at 117–138 (ITELMNEKNTLQEENKKLSEQL) forms a coiled coil. A Glycyl lysine isopeptide (Lys-Gly) (interchain with G-Cter in SUMO2) cross-link involves residue lysine 193. Serine 272 carries the phosphoserine modification. Threonine 309 carries the post-translational modification Phosphothreonine. A phosphoserine mark is found at serine 320, serine 321, and serine 343. A disordered region spans residues 348–375 (GKKTHLKTVPLSNTSAPGPEKPRSKSED). Residues lysine 354 and lysine 372 each participate in a glycyl lysine isopeptide (Lys-Gly) (interchain with G-Cter in SUMO2) cross-link. Position 373 is a phosphoserine (serine 373). Glycyl lysine isopeptide (Lys-Gly) (interchain with G-Cter in SUMO2) cross-links involve residues lysine 390, lysine 399, and lysine 405. Residues 407–417 (TSEPISEQGNI) are compositionally biased toward polar residues. The segment at 407-430 (TSEPISEQGNIGHSKDTDRDKHVV) is disordered. Residues 419–429 (HSKDTDRDKHV) show a composition bias toward basic and acidic residues. Glycyl lysine isopeptide (Lys-Gly) (interchain with G-Cter in SUMO2) cross-links involve residues lysine 433 and lysine 443. The interval 484–488 (PLDLS) is PXDLS motif. A PXDLS motif motif is present at residues 484–488 (PLDLS). The interval 503-551 (CENSKIRFRQVTLYEALKPIPRDSSSSRKALSGSCGLTKDSPEEPCLQE) is damage-recruitment motif. Lysine 520 is covalently cross-linked (Glycyl lysine isopeptide (Lys-Gly) (interchain with G-Cter in SUMO2); alternate). A disordered region spans residues 524 to 544 (RDSSSSRKALSGSCGLTKDSP). Glycyl lysine isopeptide (Lys-Gly) (interchain with G-Cter in SUMO2) cross-links involve residues lysine 564 and lysine 570. Residue lysine 596 forms a Glycyl lysine isopeptide (Lys-Gly) (interchain with G-Cter in SUMO2); alternate linkage. Glycyl lysine isopeptide (Lys-Gly) (interchain with G-Cter in SUMO2) cross-links involve residues lysine 605, lysine 630, and lysine 632. The interval 633–677 (SLQNNQDVSFENIQWSIDPGADLSQYKMGVTVDDTKDGSQSRLAG) is required for interaction with LMO4, probably by making physical contact with LMO4. Serine 656 carries the post-translational modification Phosphoserine; by ATM. A Glycyl lysine isopeptide (Lys-Gly) (interchain with G-Cter in SUMO2) cross-link involves residue lysine 668. Phosphoserine is present on serine 671. Positions 696 to 728 (KKQEQKGEESPNGERKMNDSLEDMFDRTTHEEY) are enriched in basic and acidic residues. Positions 696-757 (KKQEQKGEES…TTTKKPNISW (62 aa)) are disordered. A Glycyl lysine isopeptide (Lys-Gly) (interchain with G-Cter in SUMO2) cross-link involves residue lysine 711. The residue at position 715 (serine 715) is a Phosphoserine. The span at 747–757 (STTTKKPNISW) shows a compositional bias: polar residues.

Belongs to the COM1/SAE2/CtIP family. In terms of assembly, homotetramer; formed by antiparallel association of helical extensions protruding from the N-termini of two parallel coiled-coil dimers. Forms a dumbbell-shaped particle in which polar globular domains are held about 30 nm apart by a central rod. Homotetramerization is required for DNA-end resection and repair. Interacts (via the PXDLS motif) with CTBP1; the interaction is disrupted via binding of the adenovirus E1A to CTBP1. Component of the BRCA1-RBBP8 complex. Interacts (the Ser-321 phosphorylated form) with BRCA1 (via the C-terminal BRCT domains): the interaction occurs in the G2 phase, ubiquitinates RBBP8 and involves RBBP8 in BRCA1-dependent G2/M checkpoint control on DNA damage. Interacts with RB1. Interacts with the MRN complex. Interacts directly with MRE11; the interaction is required for efficient homologous recombination (HR) and regulation of the MRN complex. Interacts directly with RAD50. Interacts (when phosphorylated by CDK1) with NBN; promoting association with the MRN complex. Interacts with LMO4 (via the LIM zinc-binding 1 domain). Interacts with SIAH1. Interacts with RNF138. Interacts with EXD2. Interacts with CUL3 and KLHL15; this interaction leads to RBBP8 proteasomal degradation. Directly interacts with PIN1; this interaction depends upon RBBP8 phosphorylation, predominantly at Thr-309. Interacts with FZR1; this interaction leads to APC/C-mediated RBBP8 proteasomal degradation. Interacts with AUNIP; leading to recruit RBBP8 to sites of DNA damage. Interacts with SAMHD1. Interacts with HDGFL2. In terms of processing, hyperphosphorylation upon ionizing radiation results in dissociation from BRCA1. Phosphorylation by CDK1 is essential for the recruitment to DNA and the DNA repair function. Phosphorylated on Ser-321 as cells enter G2 phase. This phosphorylation is required for binding BRCA1 and for the G2/M DNA damage transition checkpoint control. Phosphorylation at Thr-309, probably catalyzed by CDK2, is required for PIN1-binding, while phosphorylation at Ser-272 serves as a PIN1 isomerization site. Phosphorylation at Thr-309 is cell-cycle dependent. It steadily increases during S phase, peaks at late S/G2 phase, and drops at G1. Phosphorylation is not required for tetramerization. Binds to DNA more strongly when dephosphorylated. Ubiquitinated. Ubiquitination at multiple sites by BRCA1 (via its N-terminal RING domain) does not lead to its proteasomal degradation but instead the ubiquitinated RBBP8 binds to chromatin following DNA damage and may play a role in G2/M checkpoint control. Ubiquitinated by RNF138 at its N-terminus. Ubiquitinated through 'Lys-48' by the E3 CUL3-KLHL15 complex; this modification leads to proteasomal degradation. Ubiquitinated by the E3 FZR1/APC/C complex; this modification leads to proteasomal degradation.

It localises to the nucleus. The protein resides in the chromosome. Functionally, endonuclease that cooperates with the MRE11-RAD50-NBN (MRN) complex in DNA-end resection, the first step of double-strand break (DSB) repair through the homologous recombination (HR) pathway. HR is restricted to S and G2 phases of the cell cycle and preferentially repairs DSBs resulting from replication fork collapse. Key determinant of DSB repair pathway choice, as it commits cells to HR by preventing classical non-homologous end-joining (NHEJ). Specifically promotes the endonuclease activity of the MRN complex to clear DNA ends containing protein adducts: recruited to DSBs by NBN following phosphorylation by CDK1, and promotes the endonuclease activity of MRE11 to clear protein-DNA adducts and generate clean double-strand break ends. Functions downstream of the MRN complex and ATM, promotes ATR activation and its recruitment to DSBs in the S/G2 phase facilitating the generation of ssDNA. Component of the BRCA1-RBBP8 complex that regulates CHEK1 activation and controls cell cycle G2/M checkpoints on DNA damage. During immunoglobulin heavy chain class-switch recombination, promotes microhomology-mediated alternative end joining (A-NHEJ) and plays an essential role in chromosomal translocations. Binds preferentially to DNA Y-junctions and to DNA substrates with blocked ends and promotes intermolecular DNA bridging. This is DNA endonuclease RBBP8 (RBBP8) from Bos taurus (Bovine).